Here is a 472-residue protein sequence, read N- to C-terminus: Ribosomal protein uS12 methylthiotransferase RimO (472 aa).

The region spanning 33 to 143 (NRIGFVSLGC…VLKHVHKYVP (111 aa)) is the MTTase N-terminal domain. [4Fe-4S] cluster-binding residues include Cys42, Cys78, Cys107, Cys175, Cys179, and Cys182. The region spanning 161-398 (LTPKHYAYLK…MEVQAEISAE (238 aa)) is the Radical SAM core domain. The 67-residue stretch at 401–467 (ARFVGRTLDI…EHDLWAEVVD (67 aa)) folds into the TRAM domain.

It belongs to the methylthiotransferase family. RimO subfamily. It depends on [4Fe-4S] cluster as a cofactor.

Its subcellular location is the cytoplasm. It catalyses the reaction L-aspartate(89)-[ribosomal protein uS12]-hydrogen + (sulfur carrier)-SH + AH2 + 2 S-adenosyl-L-methionine = 3-methylsulfanyl-L-aspartate(89)-[ribosomal protein uS12]-hydrogen + (sulfur carrier)-H + 5'-deoxyadenosine + L-methionine + A + S-adenosyl-L-homocysteine + 2 H(+). Functionally, catalyzes the methylthiolation of an aspartic acid residue of ribosomal protein uS12. The protein is Ribosomal protein uS12 methylthiotransferase RimO of Shewanella baltica (strain OS185).